Reading from the N-terminus, the 301-residue chain is Protease HtpX (301 aa).

Helical transmembrane passes span isoleucine 4–leucine 24 and leucine 38–phenylalanine 58. Zn(2+) is bound at residue histidine 147. Residue glutamate 148 is part of the active site. A Zn(2+)-binding site is contributed by histidine 151. Transmembrane regions (helical) follow at residues glycine 155–alanine 175 and phenylalanine 200–tryptophan 220. Zn(2+) is bound at residue glutamate 226.

The protein belongs to the peptidase M48B family. Zn(2+) is required as a cofactor.

It localises to the cell inner membrane. The protein is Protease HtpX of Acinetobacter baumannii (strain AB307-0294).